The primary structure comprises 225 residues: Protein-L-isoaspartate O-methyltransferase (225 aa).

S75 is a catalytic residue.

It belongs to the methyltransferase superfamily. L-isoaspartyl/D-aspartyl protein methyltransferase family.

It localises to the cytoplasm. The catalysed reaction is [protein]-L-isoaspartate + S-adenosyl-L-methionine = [protein]-L-isoaspartate alpha-methyl ester + S-adenosyl-L-homocysteine. Functionally, catalyzes the methyl esterification of L-isoaspartyl residues in peptides and proteins that result from spontaneous decomposition of normal L-aspartyl and L-asparaginyl residues. It plays a role in the repair and/or degradation of damaged proteins. This Xanthomonas euvesicatoria pv. vesicatoria (strain 85-10) (Xanthomonas campestris pv. vesicatoria) protein is Protein-L-isoaspartate O-methyltransferase.